Consider the following 106-residue polypeptide: U1-lycotoxin-Ls1b (106 aa).

The signal sequence occupies residues 1-19 (MKVLVVVALLVTLISYSSS). A propeptide spanning residues 20-40 (EGIDDPEADELLSLMANEQTR) is cleaved from the precursor. Intrachain disulfides connect Cys43/Cys58, Cys50/Cys67, Cys57/Cys85, and Cys69/Cys83.

The protein belongs to the neurotoxin 19 (CSTX) family. 04 (U1-Lctx) subfamily. In terms of tissue distribution, expressed by the venom gland.

Its subcellular location is the secreted. In Lycosa singoriensis (Wolf spider), this protein is U1-lycotoxin-Ls1b.